A 109-amino-acid chain; its full sequence is Urocortin-2 (109 aa).

Positions 1 to 22 (MTRWALVVFMVLMLDRVPGTPI) are cleaved as a signal peptide. Positions 23 to 67 (PTFQLLPQNYPETTPSSVSSESPSDTTTGPSASWSNSKASPYLDT) are excised as a propeptide. The segment at 24 to 60 (TFQLLPQNYPETTPSSVSSESPSDTTTGPSASWSNSK) is disordered. Residues 33–50 (PETTPSSVSSESPSDTTT) show a composition bias toward low complexity. Residues 51–60 (GPSASWSNSK) are compositionally biased toward polar residues. The residue at position 106 (Val106) is a Valine amide; partial.

It belongs to the sauvagine/corticotropin-releasing factor/urotensin I family. In terms of assembly, binds with high affinity to CRF receptors 2-alpha and 2-beta. Post-translationally, glycosylated.

The protein resides in the secreted. Its function is as follows. Suppresses food intake, delays gastric emptying and decreases heat-induced edema. Might represent an endogenous ligand for maintaining homeostasis after stress. The sequence is that of Urocortin-2 (Ucn2) from Rattus norvegicus (Rat).